A 391-amino-acid chain; its full sequence is NAD(P)H-quinone oxidoreductase subunit H, chloroplastic (391 aa).

The protein belongs to the complex I 49 kDa subunit family. In terms of assembly, NDH is composed of at least 16 different subunits, 5 of which are encoded in the nucleus.

The protein resides in the plastid. It is found in the chloroplast thylakoid membrane. It carries out the reaction a plastoquinone + NADH + (n+1) H(+)(in) = a plastoquinol + NAD(+) + n H(+)(out). The enzyme catalyses a plastoquinone + NADPH + (n+1) H(+)(in) = a plastoquinol + NADP(+) + n H(+)(out). Its function is as follows. NDH shuttles electrons from NAD(P)H:plastoquinone, via FMN and iron-sulfur (Fe-S) centers, to quinones in the photosynthetic chain and possibly in a chloroplast respiratory chain. The immediate electron acceptor for the enzyme in this species is believed to be plastoquinone. Couples the redox reaction to proton translocation, and thus conserves the redox energy in a proton gradient. The chain is NAD(P)H-quinone oxidoreductase subunit H, chloroplastic from Physcomitrium patens (Spreading-leaved earth moss).